A 311-amino-acid chain; its full sequence is Homeobox-leucine zipper protein ATHB-6 (311 aa).

The segment covering 1-10 (MMKRLSSSDS) has biased composition (polar residues). The interval 1–32 (MMKRLSSSDSVGGLISLCPTTSTDEQSPRRYG) is disordered. Residues 1–43 (MMKRLSSSDSVGGLISLCPTTSTDEQSPRRYGGREFQSMLEGY) are interaction with ABI1. The homeobox DNA-binding region spans 59 to 118 (LSEKKRRLSINQVKALEKNFELENKLEPERKVKLAQELGLQPRQVAVWFQNRRARWKTKQ). The tract at residues 119–154 (LEKDYGVLKTQYDSLRHNFDSLRRDNESLLQEISKL) is leucine-zipper. Residues 157–183 (KLNGGGGEEEEEENNAAVTTESDISVK) are disordered. The interaction with ABI1 stretch occupies residues 218–311 (LRDLLPLKAA…HWYSTVDHWN (94 aa)).

The protein belongs to the HD-ZIP homeobox family. Class I subfamily. Interacts with ABI1. Post-translationally, phosphorylated by PKA. Reversible inactivation of the binding to DNA by phosphorylation. In terms of tissue distribution, widely expressed.

The protein localises to the nucleus. Functionally, transcription activator that may act as growth regulators in response to water deficit. Interacts with the core sequence 5'-CAATTATTA-3' of promoters in response to ABA and in an ABI1-dependent manner. Involved in the negative regulation of the ABA signaling pathway. This is Homeobox-leucine zipper protein ATHB-6 (ATHB-6) from Arabidopsis thaliana (Mouse-ear cress).